The sequence spans 454 residues: MLPDWACHVEDIMIIEHSAEVRGKTPLYRHLYVQVLAAIAAGILLGHFYPDIGTQLKPLGDAFIRLVKMIIAPVIFLTVATGIAGMTDLAKVGRVAGKAMIYFLAFSTLALLVGLVVANLVQPGAGMHIDPASLDAKAVATYAQKAHEQSITGFLMNIIPTTLVGAFAEGDILQVLFISVLFGISLAIVGKKAEPVVDFLQALTLPIFRLVAILMKAAPIGAFGAMAFTIGKYGIASIANLAMLIGTFYLTSFLFVFVVLGAVARYNGFSILSLVRYIKEELLLVLGTSSSEAALPGLMNKMEKAGCKRSVVGLVIPTGYSFNLDGTNIYMTLAALFIAQATDTPLSYGDQILLLLVAMLSSKGAAGITGAGFITLAATLSVVPSVPVAGMALILGIDRFMSECRALTNFVGNAVATIVVAKWEGELDQAQLSAALGGEMQVETIPAVVVQPAE.

A run of 9 helical transmembrane segments spans residues 33–53, 66–86, 101–121, 148–168, 170–190, 210–230, 243–263, 354–374, and 377–397; these read VQVL…PDIG, LVKM…IAGM, IYFL…ANLV, EQSI…GAFA, GDIL…AIVG, LVAI…AFTI, MLIG…LGAV, LLLV…AGFI, and AATL…ILGI.

This sequence belongs to the dicarboxylate/amino acid:cation symporter (DAACS) (TC 2.A.23) family.

The protein localises to the cell inner membrane. In terms of biological role, responsible for the transport of dicarboxylates such as succinate, fumarate, and malate from the periplasm across the membrane. The protein is C4-dicarboxylate transport protein of Sinorhizobium medicae (strain WSM419) (Ensifer medicae).